The chain runs to 89 residues: Small ribosomal subunit protein uS15 (89 aa).

This sequence belongs to the universal ribosomal protein uS15 family. Part of the 30S ribosomal subunit. Forms a bridge to the 50S subunit in the 70S ribosome, contacting the 23S rRNA.

Its function is as follows. One of the primary rRNA binding proteins, it binds directly to 16S rRNA where it helps nucleate assembly of the platform of the 30S subunit by binding and bridging several RNA helices of the 16S rRNA. Functionally, forms an intersubunit bridge (bridge B4) with the 23S rRNA of the 50S subunit in the ribosome. The sequence is that of Small ribosomal subunit protein uS15 from Lactobacillus johnsonii (strain CNCM I-12250 / La1 / NCC 533).